We begin with the raw amino-acid sequence, 349 residues long: DNA polymerase IV (349 aa).

The 182-residue stretch at 7–188 (IIHIDMDYFF…LPVKKLFGVG (182 aa)) folds into the UmuC domain. Residues aspartate 11 and aspartate 106 each coordinate Mg(2+). Residue glutamate 107 is part of the active site.

It belongs to the DNA polymerase type-Y family. Monomer. The cofactor is Mg(2+).

It localises to the cytoplasm. The enzyme catalyses DNA(n) + a 2'-deoxyribonucleoside 5'-triphosphate = DNA(n+1) + diphosphate. Poorly processive, error-prone DNA polymerase involved in untargeted mutagenesis. Copies undamaged DNA at stalled replication forks, which arise in vivo from mismatched or misaligned primer ends. These misaligned primers can be extended by PolIV. Exhibits no 3'-5' exonuclease (proofreading) activity. May be involved in translesional synthesis, in conjunction with the beta clamp from PolIII. This is DNA polymerase IV from Francisella tularensis subsp. holarctica (strain FTNF002-00 / FTA).